Consider the following 426-residue polypeptide: MVLSVPVIALGATLGTATSILALCGVTCLCRHMHPKKGLLPRDREPDPEKARPGVLQAAQQFNVKKSTEPVQPRPLLKFPDIYGPRPAVTAPEVINYADYTLGTTEESAAPASPQAQSDSRLKRQVTEELFILPQNGVVEDVCVMETWNPEKAASWNQAPKLHFRLDYDQKKAELFVTSLEAVTSDHEGGCDCYIQGSVAVKTGSVEAQTALKKRQLHTTWEEGLTLPLGEEELPTATLTLTLRTCDRFSRHSVIGELRLGLNGASVPLGTAQWGELKTTAKEPSAGTGEVLLSISYLPAANRLLVVLIKAKNLHSNQSKELLGKDVSVKVTLKHQAQKLKKKQTKRAKHKINPVWNEMIMFELPDDLLQASSVELEVLGQGEEGPSCELGRCSLGLHASGSERSHWEEMLKNPRRQIAMWHQLHL.

At M1 to P6 the chain is on the vesicular side. Residues V7 to L29 form a helical membrane-spanning segment. The Cytoplasmic segment spans residues C30–L426. 2 C2 domains span residues Q158–G275 and G287–H422.

The protein belongs to the synaptotagmin family. Interacts with NRXN1. In terms of tissue distribution, expressed in brain, spleen, kidney and testis.

The protein localises to the membrane. In terms of biological role, may be involved in transport vesicle docking to the plasma membrane. This Rattus norvegicus (Rat) protein is Synaptotagmin-13 (Syt13).